The chain runs to 1360 residues: DNA-directed RNA polymerase subunit beta (1360 aa).

This sequence belongs to the RNA polymerase beta chain family. As to quaternary structure, the RNAP catalytic core consists of 2 alpha, 1 beta, 1 beta' and 1 omega subunit. When a sigma factor is associated with the core the holoenzyme is formed, which can initiate transcription.

The enzyme catalyses RNA(n) + a ribonucleoside 5'-triphosphate = RNA(n+1) + diphosphate. Functionally, DNA-dependent RNA polymerase catalyzes the transcription of DNA into RNA using the four ribonucleoside triphosphates as substrates. The polypeptide is DNA-directed RNA polymerase subunit beta (Magnetococcus marinus (strain ATCC BAA-1437 / JCM 17883 / MC-1)).